Consider the following 363-residue polypeptide: Mitogen-activated protein kinase 4 (363 aa).

One can recognise a Protein kinase domain in the interval 30–318 (YDLVKVVGFG…AKQVMEHPYF (289 aa)). Residues 36 to 44 (VGFGACGTV) and Lys-59 contribute to the ATP site. Catalysis depends on Asp-156, which acts as the Proton acceptor. Phosphoserine is present on residues Ser-186 and Ser-187. Phosphothreonine; by MKK5 is present on Thr-190. A TQY motif is present at residues 190–192 (TQY). Tyr-192 carries the phosphotyrosine; by MKK5 modification.

Belongs to the protein kinase superfamily. CMGC Ser/Thr protein kinase family. MAP kinase subfamily. The cofactor is Mg(2+). In terms of processing, dually phosphorylated on Thr-190 and Tyr-192, which activates the enzyme.

The catalysed reaction is L-seryl-[protein] + ATP = O-phospho-L-seryl-[protein] + ADP + H(+). It catalyses the reaction L-threonyl-[protein] + ATP = O-phospho-L-threonyl-[protein] + ADP + H(+). Essential for the two main proliferating life stages, the promastigotes and amastigotes, of the parasite. This chain is Mitogen-activated protein kinase 4, found in Leishmania mexicana.